We begin with the raw amino-acid sequence, 109 residues long: Nucleoid-associated protein CKO_02678 (109 aa).

The segment at 89–109 is disordered; that stretch reads KEKMASVSSGMQLPPGFKMPF.

It belongs to the YbaB/EbfC family. Homodimer.

The protein localises to the cytoplasm. It localises to the nucleoid. Its function is as follows. Binds to DNA and alters its conformation. May be involved in regulation of gene expression, nucleoid organization and DNA protection. The chain is Nucleoid-associated protein CKO_02678 from Citrobacter koseri (strain ATCC BAA-895 / CDC 4225-83 / SGSC4696).